A 35-amino-acid chain; its full sequence is Mu-thomitoxin-Hme1c (35 aa).

3 cysteine pairs are disulfide-bonded: Cys2-Cys18, Cys9-Cys23, and Cys17-Cys34.

The protein belongs to the neurotoxin 07 (Beta/delta-agtx) family. In terms of tissue distribution, expressed by the venom gland.

It localises to the secreted. Its function is as follows. Gating-modifier toxin that inhibits mammalian and insect voltage-gated sodium channels. It shifts the voltage dependence of channel activation to more positive voltages. It shows potent activity on Nav1.4/SCN4A (IC(50)=103 nM), Nav1.5/SCN5A (IC(50)=268 nM) and Para/DmNav1 (IC(50)=555 nM) and lower activities on Nav1.2/SCN2A (IC(50)=1447 nM) and Nav1.6/SCN8A (IC(50)=3504 nM). In addition, at a concentration of 1 uM, the toxin inhibits 90-100% of sodium current through Nav1.2/SCN2A, Nav1.4/SCN4A, Nav1.5/SCN5A, Nav1.6/SCN8A and Para/DmNav1 channels, when the voltage of maximal activation of the channel in control conditions is applied. It binds to the S3-S4 helix-loop-helix motif in the voltage-sensing domain of repeat 1 (shown on hNav1.4/SCN4A). The toxin is amphiphilic and binds to both neutral and negatively charged lipid vesicles with high affinity. The hydrophobic face lies on the opposite side to the hydrophobic faces of classical gating modifiers. In Heriaeus mellotteei (Crab spider), this protein is Mu-thomitoxin-Hme1c.